The primary structure comprises 363 residues: Sensor protein BasS (363 aa).

Residues 1–13 (MHFLRRPISLRQR) are Cytoplasmic-facing. A helical membrane pass occupies residues 14–34 (LILTIGAILLVFELISVFWLW). Topologically, residues 35–64 (HESTEQIQLFEQALRDNRNNDRHIMREIRE) are periplasmic. A helical transmembrane segment spans residues 65–88 (AVASLIVPGVFMVSLTLFICYQAV). Residues 89-141 (RRITRPLAELQKELEARTADNLTPIAIHSATLEIEAVVSALNDLVSRLTSTLD) form the HAMP domain. Over 89–363 (RRITRPLAEL…KKDQYVANQI (275 aa)) the chain is Cytoplasmic. Residues 149–357 (DVAHELRTPL…RAWVRLKKDQ (209 aa)) enclose the Histidine kinase domain. Histidine 152 is subject to Phosphohistidine; by autocatalysis.

Autophosphorylated.

It is found in the cell inner membrane. The catalysed reaction is ATP + protein L-histidine = ADP + protein N-phospho-L-histidine.. Member of the two-component regulatory system BasS/BasR Autophosphorylates and activates BasR by phosphorylation. The chain is Sensor protein BasS (basS) from Escherichia coli (strain K12).